The following is a 490-amino-acid chain: Cheilanthifoline synthase (490 aa).

Residues 2-22 (EESLWVVTATVVVVFAIAKLL) form a helical membrane-spanning segment. Residue Cys432 participates in heme binding.

It belongs to the cytochrome P450 family. Requires heme as cofactor. In terms of tissue distribution, expressed in roots. Detected in leaves and stems.

The protein localises to the endoplasmic reticulum membrane. It carries out the reaction (S)-scoulerine + reduced [NADPH--hemoprotein reductase] + O2 = (S)-cheilanthifoline + oxidized [NADPH--hemoprotein reductase] + 2 H2O + H(+). It functions in the pathway alkaloid biosynthesis. Its function is as follows. Methylenedioxy bridge-forming cytochrome P450 involved in the biosynthesis of isoquinoline alkaloids. Converts (S)-scoulerine into (R,S)-cheilanthifoline. Catalyzes an oxidative reaction that does not incorporate oxygen into the product. The polypeptide is Cheilanthifoline synthase (CYP719A5) (Eschscholzia californica (California poppy)).